The primary structure comprises 390 residues: Large ribosomal subunit protein mL44 (390 aa).

Residues 1–59 (MGIVLKRAIAAGMKPFPNSTWHWSRTIRPFSQHLSSTCFLQQSSRFTSKRYLHLSTLTQ) constitute a mitochondrion transit peptide. Positions 139-205 (AFVNTVPTNK…LAHIAKYWGI (67 aa)) constitute an RNase III domain. The 71-residue stretch at 302–372 (QPTRELAMLC…ATDALMKWYC (71 aa)) folds into the DRBM domain.

The protein belongs to the ribonuclease III family. Mitochondrion-specific ribosomal protein mL44 subfamily. Component of the mitochondrial large ribosomal subunit (mt-LSU). Mature yeast 74S mitochondrial ribosomes consist of a small (37S) and a large (54S) subunit. The 37S small subunit contains a 15S ribosomal RNA (15S mt-rRNA) and 34 different proteins. The 54S large subunit contains a 21S rRNA (21S mt-rRNA) and 46 different proteins. mL44 forms a heterodimer with mL57 and stabilizes rRNA expansion segments 1/2 at a membrane-facing protuberance close to the point of attachment of the ribosome to the translocon in the membrane.

It is found in the mitochondrion. Component of the mitochondrial ribosome (mitoribosome), a dedicated translation machinery responsible for the synthesis of mitochondrial genome-encoded proteins, including at least some of the essential transmembrane subunits of the mitochondrial respiratory chain. The mitoribosomes are attached to the mitochondrial inner membrane and translation products are cotranslationally integrated into the membrane. The chain is Large ribosomal subunit protein mL44 (MRPL3) from Saccharomyces cerevisiae (strain ATCC 204508 / S288c) (Baker's yeast).